The following is a 192-amino-acid chain: Secreted phosphoprotein 24 (192 aa).

The N-terminal stretch at 1-29 (MGKTPEDFERHTMRSLIFVLALSVFTCSG) is a signal peptide. Intrachain disulfides connect Cys92/Cys103 and Cys116/Cys134. Residues 155–192 (TDPRKRGSSRSEAFSSRGRGHSNGDWRKPDYTSPGKVE) are disordered.

Belongs to the SPP2 family. Multiply phosphorylated at serine residues.

The protein resides in the secreted. Its function is as follows. Could coordinate an aspect of bone turnover. In Gallus gallus (Chicken), this protein is Secreted phosphoprotein 24 (SPP2).